Reading from the N-terminus, the 388-residue chain is Succinyl-diaminopimelate desuccinylase (388 aa).

Residue H72 participates in Zn(2+) binding. D74 is a catalytic residue. Position 105 (D105) interacts with Zn(2+). E139 acts as the Proton acceptor in catalysis. The Zn(2+) site is built by E140, E168, and H353.

The protein belongs to the peptidase M20A family. DapE subfamily. In terms of assembly, homodimer. The cofactor is Zn(2+). Co(2+) serves as cofactor.

The enzyme catalyses N-succinyl-(2S,6S)-2,6-diaminopimelate + H2O = (2S,6S)-2,6-diaminopimelate + succinate. The protein operates within amino-acid biosynthesis; L-lysine biosynthesis via DAP pathway; LL-2,6-diaminopimelate from (S)-tetrahydrodipicolinate (succinylase route): step 3/3. In terms of biological role, catalyzes the hydrolysis of N-succinyl-L,L-diaminopimelic acid (SDAP), forming succinate and LL-2,6-diaminopimelate (DAP), an intermediate involved in the bacterial biosynthesis of lysine and meso-diaminopimelic acid, an essential component of bacterial cell walls. The chain is Succinyl-diaminopimelate desuccinylase from Orientia tsutsugamushi (strain Ikeda) (Rickettsia tsutsugamushi).